A 2209-amino-acid polypeptide reads, in one-letter code: Kinetochore-associated protein 1 (2209 aa).

T13 bears the Phosphothreonine; by TTK mark. S15 carries the phosphoserine; by TTK modification. The residue at position 1035 (T1035) is a Phosphothreonine. The residue at position 1045 (S1045) is a Phosphoserine.

Interacts with ZW10; the interaction is required for stable association with the kinetochore. Component of the RZZ complex composed of KNTC1/ROD, ZW10 and ZWILCH; in the complex interacts directly with ZWILCH. In terms of tissue distribution, high expression in testis.

The protein localises to the cytoplasm. It is found in the nucleus. Its subcellular location is the chromosome. The protein resides in the centromere. It localises to the kinetochore. The protein localises to the cytoskeleton. It is found in the spindle. In terms of biological role, essential component of the mitotic checkpoint, which prevents cells from prematurely exiting mitosis. Required for the assembly of the dynein-dynactin and MAD1-MAD2 complexes onto kinetochores. Its function related to the spindle assembly machinery is proposed to depend on its association in the mitotic RZZ complex. In Homo sapiens (Human), this protein is Kinetochore-associated protein 1 (KNTC1).